We begin with the raw amino-acid sequence, 235 residues long: Large ribosomal subunit protein uL1 (235 aa).

This sequence belongs to the universal ribosomal protein uL1 family. Part of the 50S ribosomal subunit.

Its function is as follows. Binds directly to 23S rRNA. The L1 stalk is quite mobile in the ribosome, and is involved in E site tRNA release. Protein L1 is also a translational repressor protein, it controls the translation of the L11 operon by binding to its mRNA. The chain is Large ribosomal subunit protein uL1 from Citrobacter koseri (strain ATCC BAA-895 / CDC 4225-83 / SGSC4696).